Reading from the N-terminus, the 79-residue chain is Aquaporin Z (79 aa).

Transmembrane regions (helical) follow at residues 4–24 (LFAE…SAVF) and 33–53 (IGFA…AYAV). The NPA 1 signature appears at 62–64 (NPA).

It belongs to the MIP/aquaporin (TC 1.A.8) family. Homotetramer.

The protein localises to the cell membrane. It carries out the reaction H2O(in) = H2O(out). Functionally, channel that permits osmotically driven movement of water in both directions. It is involved in the osmoregulation and in the maintenance of cell turgor during volume expansion in rapidly growing cells. It mediates rapid entry or exit of water in response to abrupt changes in osmolarity. This Flavobacterium johnsoniae (Cytophaga johnsonae) protein is Aquaporin Z.